The following is a 386-amino-acid chain: Succinate--CoA ligase [ADP-forming] subunit beta (386 aa).

Positions 9-244 constitute an ATP-grasp domain; sequence KEILRSYGVS…LDEEDPKEVE (236 aa). ATP-binding positions include Lys-46, 53–55, Glu-99, Cys-102, and Glu-107; that span reads GRG. 2 residues coordinate Mg(2+): Asn-199 and Asp-213. Substrate is bound by residues Asn-264 and 321–323; that span reads GIM.

It belongs to the succinate/malate CoA ligase beta subunit family. As to quaternary structure, heterotetramer of two alpha and two beta subunits. The cofactor is Mg(2+).

The catalysed reaction is succinate + ATP + CoA = succinyl-CoA + ADP + phosphate. It carries out the reaction GTP + succinate + CoA = succinyl-CoA + GDP + phosphate. The protein operates within carbohydrate metabolism; tricarboxylic acid cycle; succinate from succinyl-CoA (ligase route): step 1/1. In terms of biological role, succinyl-CoA synthetase functions in the citric acid cycle (TCA), coupling the hydrolysis of succinyl-CoA to the synthesis of either ATP or GTP and thus represents the only step of substrate-level phosphorylation in the TCA. The beta subunit provides nucleotide specificity of the enzyme and binds the substrate succinate, while the binding sites for coenzyme A and phosphate are found in the alpha subunit. In Geobacillus kaustophilus (strain HTA426), this protein is Succinate--CoA ligase [ADP-forming] subunit beta.